An 801-amino-acid chain; its full sequence is Disks large homolog 4 (801 aa).

The 57-residue stretch at 4–60 folds into the L27 domain; it reads KREDTERALQAMEACQSAGDEGFRTRAERLLTIFQSDLFQALLDIQEFYELTVFENQ. PDZ domains follow at residues 153-240 and 248-335; these read EITL…LRHK and ELKL…AKTL. The disordered stretch occupies residues 339-373; sequence HHQDAYNPPDITSSYSPHMDMSDYPQALSPSSPRR. In terms of domain architecture, PDZ 3 spans 393–474; it reads RVVIHRGSTG…TVTIITQYRP (82 aa). An SH3 domain is found at 507-577; that stretch reads KRSFFIRALF…PSKRRVERKE (71 aa). One can recognise a Guanylate kinase-like domain in the interval 610 to 786; it reads ARPVIILGPS…IYHHVKSVIE (177 aa).

The protein belongs to the MAGUK family. In terms of processing, ubiquitinated by MDM2 in response to NMDA receptor activation, leading to proteasome-mediated degradation of DLG4 which is required for AMPA receptor endocytosis. Palmitoylated. Palmitoylation is required for targeting to postsynaptic density, plasma membrane and synapses.

Its subcellular location is the cell membrane. It is found in the postsynaptic density. The protein resides in the synapse. Its function is as follows. Postsynaptic scaffolding protein that plays a critical role in synaptogenesis and synaptic plasticity by providing a platform for the postsynaptic clustering of crucial synaptic proteins. This Danio rerio (Zebrafish) protein is Disks large homolog 4 (dlg4).